The chain runs to 272 residues: Glutamate racemase (272 aa).

Residues 9 to 10 and 41 to 42 each bind substrate; these read DS and YG. Cysteine 73 acts as the Proton donor/acceptor in catalysis. 74–75 lines the substrate pocket; that stretch reads NT. The active-site Proton donor/acceptor is cysteine 183. Substrate is bound at residue 184–185; that stretch reads TH.

Belongs to the aspartate/glutamate racemases family.

It carries out the reaction L-glutamate = D-glutamate. It functions in the pathway cell wall biogenesis; peptidoglycan biosynthesis. Functionally, provides the (R)-glutamate required for cell wall biosynthesis. The sequence is that of Glutamate racemase from Shewanella sp. (strain MR-4).